The sequence spans 343 residues: Dihydroorotase (343 aa).

Residues H14 and H16 each coordinate Zn(2+). Residues 16–18 and N42 each bind substrate; that span reads HLR. Zn(2+) is bound by residues K97, H136, H170, and D242. At K97 the chain carries N6-carboxylysine. Residue H136 participates in substrate binding. Residue D242 is part of the active site. 2 residues coordinate substrate: H246 and A258.

This sequence belongs to the metallo-dependent hydrolases superfamily. DHOase family. Class II DHOase subfamily. In terms of assembly, homodimer. Zn(2+) serves as cofactor.

It catalyses the reaction (S)-dihydroorotate + H2O = N-carbamoyl-L-aspartate + H(+). It functions in the pathway pyrimidine metabolism; UMP biosynthesis via de novo pathway; (S)-dihydroorotate from bicarbonate: step 3/3. In terms of biological role, catalyzes the reversible cyclization of carbamoyl aspartate to dihydroorotate. This Helicobacter hepaticus (strain ATCC 51449 / 3B1) protein is Dihydroorotase.